We begin with the raw amino-acid sequence, 823 residues long: Kinesin-like protein KIN-7N (823 aa).

In terms of domain architecture, Kinesin motor spans 3–325; sequence KICVAVRVRP…LQFASRAKRI (323 aa). 83–90 contributes to the ATP binding site; the sequence is GQTSSGKT. Coiled-coil stretches lie at residues 341-414, 527-557, and 696-786; these read LKRQ…NLNN, RENH…FNEQ, and EKKL…MEEE.

Belongs to the TRAFAC class myosin-kinesin ATPase superfamily. Kinesin family. KIN-7 subfamily.

The sequence is that of Kinesin-like protein KIN-7N from Arabidopsis thaliana (Mouse-ear cress).